Here is a 282-residue protein sequence, read N- to C-terminus: tRNA pseudouridine synthase A (282 aa).

Residue Asp51 is the Nucleophile of the active site. Tyr109 lines the substrate pocket.

The protein belongs to the tRNA pseudouridine synthase TruA family. In terms of assembly, homodimer.

The catalysed reaction is uridine(38/39/40) in tRNA = pseudouridine(38/39/40) in tRNA. Formation of pseudouridine at positions 38, 39 and 40 in the anticodon stem and loop of transfer RNAs. The sequence is that of tRNA pseudouridine synthase A from Delftia acidovorans (strain DSM 14801 / SPH-1).